The chain runs to 92 residues: Putative membrane protein insertion efficiency factor (92 aa).

It belongs to the UPF0161 family.

Its subcellular location is the cell inner membrane. Its function is as follows. Could be involved in insertion of integral membrane proteins into the membrane. This Synechococcus sp. (strain CC9605) protein is Putative membrane protein insertion efficiency factor.